The sequence spans 394 residues: Elongation factor Tu (394 aa).

Positions 10–204 (KPHVNVGTIG…ALDTYIPEPE (195 aa)) constitute a tr-type G domain. The G1 stretch occupies residues 19–26 (GHVDHGKT). Position 19 to 26 (19 to 26 (GHVDHGKT)) interacts with GTP. T26 serves as a coordination point for Mg(2+). The segment at 60–64 (GITIN) is G2. The interval 81-84 (DCPG) is G3. GTP contacts are provided by residues 81-85 (DCPGH) and 136-139 (NKCD). Residues 136-139 (NKCD) are G4. The segment at 174–176 (SAL) is G5.

The protein belongs to the TRAFAC class translation factor GTPase superfamily. Classic translation factor GTPase family. EF-Tu/EF-1A subfamily. As to quaternary structure, monomer.

It localises to the cytoplasm. It catalyses the reaction GTP + H2O = GDP + phosphate + H(+). In terms of biological role, GTP hydrolase that promotes the GTP-dependent binding of aminoacyl-tRNA to the A-site of ribosomes during protein biosynthesis. This is Elongation factor Tu from Shewanella denitrificans (strain OS217 / ATCC BAA-1090 / DSM 15013).